A 119-amino-acid chain; its full sequence is Large ribosomal subunit protein bL20 (119 aa).

It belongs to the bacterial ribosomal protein bL20 family.

In terms of biological role, binds directly to 23S ribosomal RNA and is necessary for the in vitro assembly process of the 50S ribosomal subunit. It is not involved in the protein synthesizing functions of that subunit. This chain is Large ribosomal subunit protein bL20, found in Rhodopseudomonas palustris (strain BisB5).